Here is an 859-residue protein sequence, read N- to C-terminus: MVSIAFYGGIPGGISTPITQQSEKSKCEENTMFQPYCYNNDSKNSMAESKEARDQEMNLKEESKEEKRRNDWWKIGMFLLCLAGTTGGILWWYEGLPQQHYIGLVAIGGRLNGSGQSNAIECWGSFPGCRPFQNYFSYETNRSMHMDNNTATLLEAYHREITFIYKSSCTDSDHCQEYQCKKVNLNSSASSNSVRVEDVTNTAEYWGFKWLECNQTENFKTILVPENEMVNINDTDTWIPKGCNETWARVKRCPIDILYGIHPIRLCVQPPFFLVQEKGIADTSRIGNCGPTIFLGVLEDNKGVVRGDYTACNVRRLNINRKDYTGIYQVPIFYTCTFTNITSCNSKPIISVIMYETNQVQYLLCNNNNSNNYNCVVQSFGVIGQAHLELPRPNKRIRNQSFNQYNCSINNKTELETWKLVKTSGVTPLPISSEANTGLIRHKRDFGISAIVAAIVAATAIAASATMSYVALTEVNKIMEVQNHTFEVENSTLNGMDLIERQIKILYAMILQTHADVQLLKERQQVEETFNLIGCIERTHVFCHTGHPWNMSWGHLNESTQWDDWVSKMEDLNQEILTTLHGARNNLAQSMITFNTPDSIAQFGKDLWSHIGNWIPGLGASIIKYIVMFLLIYLLLTSSPKILRALWKVTSGAGSSGSRYLKKKFHHKHASREDTWDQAQHNIHLAGVTGGSGDKYYKQKYSRNDWNGESEEYNRRPKSWVKSIEAFGESYISEKTKGEISQPGAAINEHKNGSGGNNPHQGSLDLEIRSEGGNIYDCCIKAQEGTLAIPCCGFPLWLFWGLVIIVGRIAGYGLRGLAVIIRICIRGLNLIFEIIRKMLDYIGRALNPGTSHVSMPQYV.

Positions 1-6 (MVSIAF) are excised as a propeptide. Residues 7-614 (YGGIPGGIST…KDLWSHIGNW (608 aa)) are Extracellular-facing. N-linked (GlcNAc...) asparagine; by host glycosylation is found at N40, N112, N141, N148, N186, N214, N233, N244, N340, N368, N399, N406, and N411. Residues 446–466 (FGISAIVAAIVAATAIAASAT) are fusion peptide. N-linked (GlcNAc...) asparagine; by host glycans are attached at residues N483 and N490. The tract at residues 498 to 513 (LIERQIKILYAMILQT) is immunosuppression. 2 N-linked (GlcNAc...) asparagine; by host glycosylation sites follow: N550 and N557. Coiled-coil stretches lie at residues 576–624 (ILTT…SIIK) and 663–699 (KKFH…YYKQ). A helical transmembrane segment spans residues 615–635 (IPGLGASIIKYIVMFLLIYLL). The Cytoplasmic portion of the chain corresponds to 636–859 (LTSSPKILRA…TSHVSMPQYV (224 aa)).

In terms of assembly, the mature envelope protein (Env) consists of a trimer of SU-TM heterodimers attached by noncovalent interactions or by a labile interchain disulfide bond. In terms of processing, specific enzymatic cleavages in vivo yield mature proteins. Envelope glycoproteins are synthesized as an inactive precursor that is N-glycosylated and processed likely by host cell furin or by a furin-like protease in the Golgi to yield the mature SU and TM proteins. The cleavage site between SU and TM requires the minimal sequence [KR]-X-[KR]-R.

The protein localises to the virion membrane. The protein resides in the host cell membrane. Functionally, the surface protein (SU) attaches the virus to the host cell by binding to its receptor. This interaction triggers the refolding of the transmembrane protein (TM) and is thought to activate its fusogenic potential by unmasking its fusion peptide. Fusion occurs at the host cell plasma membrane. In terms of biological role, the transmembrane protein (TM) acts as a class I viral fusion protein. Under the current model, the protein has at least 3 conformational states: pre-fusion native state, pre-hairpin intermediate state, and post-fusion hairpin state. During viral and target cell membrane fusion, the coiled coil regions (heptad repeats) assume a trimer-of-hairpins structure, positioning the fusion peptide in close proximity to the C-terminal region of the ectodomain. The formation of this structure appears to drive apposition and subsequent fusion of viral and target cell membranes. Membranes fusion leads to delivery of the nucleocapsid into the cytoplasm. The polypeptide is Envelope glycoprotein (env) (Equus asinus (Donkey)).